The sequence spans 396 residues: uncharacterized protein (396 aa).

Transmembrane regions (helical) follow at residues Thr-8–Ser-28, Ile-44–Val-64, Pro-73–Pro-93, Leu-97–Tyr-117, Val-133–Leu-153, Met-158–Leu-178, Ala-213–Pro-233, Leu-250–Asn-270, Val-276–Val-296, Ile-304–Met-324, Ile-338–Ala-358, and Ile-363–Phe-383.

This sequence belongs to the major facilitator superfamily.

The protein localises to the cell membrane. This is an uncharacterized protein from Bacillus subtilis (strain 168).